Reading from the N-terminus, the 187-residue chain is Putative protein 2 (187 aa).

2 consecutive transmembrane segments (helical) span residues 10 to 27 (MLAAFALMTLFLLDNVGV) and 99 to 121 (VTIIIFLSVVGALLLYMLFLLLV).

It belongs to the TMEM9 family.

Its subcellular location is the membrane. This is Putative protein 2 from Takifugu rubripes (Japanese pufferfish).